Consider the following 867-residue polypeptide: MGKIFSWLVVLLSLISLVPVPSESAVLSVDLGSEWVKVAVVNLKRGQSPISVAINEMSKRKSPALVAFQSGDRLLGEEAAGITARYPNKVYSQLRDMVGKPFKHVKDFIDSVYLPFDIVEDSRGAVGIKIDDGSTVYSVEELLAMILGYASNLAEFHAKIPVKDMVVSVPPYFGQAERRGLIQASQLAGVNVLSLVNEHSGAALQYGIDKDFANGSRHVIFYDMGSSSTYAALVYYSAYSEKEYGKTVSVNQFQVKDVRWDLGLGGQSMEMRLVEHFADEFNKQLGNGVDVRKFPKAMAKLKKQVKRTKEILSANTAAPISVESLHDDRDFRSTITREKFEELCKDLWERSLTPLKDVLKHSGLKIDDISAVELIGGATRVPKLQSTIQEFIGKQQLDKHLDADEAIVLGSALHAANLSDGIKLKRRLGIVDGSPYGFLVELEGPNVKKDESTKQQLVPRMKKLPSKMFRSFVLDKDFDVSLAYESEGILPPGTTSPVFAQYSVSGLADASEKYSSRNLSAPIKANLHFSLSRSGILSLDRGDAVIEITEWVDVPKKNVTIDSNTTTSTGNATDENSQENKEDLQTDAENSTASNTTAEEPAVASLGTEKKLKKRTFRIPLKVVEKTVGPGAPFSKESLAEAKIKLEALDKKDRERRRTAELKNNLESYIYATKEKLETPEFEKISTQEERKAFVEKLDEVQDWLYMDGEDANATEFEKRLDSLKAIGSPISFRSEELTARPVAIEYARKYLTELKEIIKEWETNKTWLPKEKIDEVSKEAEKVKSWLDKNVAEQEKTSLWSKPVFTSTEVYAKVFTLQDKVTKVNKIPKPKPKIEKVTKTENTTKEEEQSKSSDEAAKEEESHDEL.

Residues 1 to 24 (MGKIFSWLVVLLSLISLVPVPSES) form the signal peptide. Polar residues-rich tracts occupy residues 560-575 (TIDSNTTTSTGNATDE) and 587-598 (DAENSTASNTTA). 2 disordered regions span residues 560-607 (TIDS…ASLG) and 829-867 (PKPKPKIEKVTKTENTTKEEEQSKSSDEAAKEEESHDEL). Basic and acidic residues predominate over residues 833 to 867 (PKIEKVTKTENTTKEEEQSKSSDEAAKEEESHDEL). Positions 865–867 (DEL) match the Prevents secretion from ER motif.

The protein belongs to the heat shock protein 70 (TC 1.A.33) family. HSP110/SSE subfamily.

The protein localises to the endoplasmic reticulum lumen. The polypeptide is Heat shock 70 kDa protein 17 (HSP70-17) (Arabidopsis thaliana (Mouse-ear cress)).